The following is a 317-amino-acid chain: Phosphatidylglycerol--prolipoprotein diacylglyceryl transferase 2 (317 aa).

4 helical membrane passes run 19-39 (IPLRAYAFCIILGVFAAVWLG), 51-71 (GVIADVTLWAVPFGLVGGRLY), 93-113 (VWEGGLGIWGAIALGAVGAWI), and 120-140 (IPLPAFADAVAPGIVLAQAIG). A 1,2-diacyl-sn-glycero-3-phospho-(1'-sn-glycerol) is bound at residue arginine 141. Transmembrane regions (helical) follow at residues 180-200 (PTFLYESLWNIGVAALILWAA), 211-230 (FALYVAAYTVGRFGTEYLRI), and 241-261 (LNNWTSVLVFLGAVACLVVSA). Residues 275–317 (GAGADGRTDDPRPADASVGLASGPPGNSTPRRATESWNVRNRS) are disordered. Residues 299-317 (PGNSTPRRATESWNVRNRS) show a composition bias toward polar residues.

This sequence belongs to the Lgt family.

It is found in the cell membrane. It catalyses the reaction L-cysteinyl-[prolipoprotein] + a 1,2-diacyl-sn-glycero-3-phospho-(1'-sn-glycerol) = an S-1,2-diacyl-sn-glyceryl-L-cysteinyl-[prolipoprotein] + sn-glycerol 1-phosphate + H(+). It participates in protein modification; lipoprotein biosynthesis (diacylglyceryl transfer). In terms of biological role, catalyzes the transfer of the diacylglyceryl group from phosphatidylglycerol to the sulfhydryl group of the N-terminal cysteine of a prolipoprotein, the first step in the formation of mature lipoproteins. This is Phosphatidylglycerol--prolipoprotein diacylglyceryl transferase 2 from Streptomyces coelicolor (strain ATCC BAA-471 / A3(2) / M145).